Reading from the N-terminus, the 87-residue chain is uncharacterized protein (87 aa).

The protein belongs to the SF3B5 family.

This is an uncharacterized protein from Arabidopsis thaliana (Mouse-ear cress).